Consider the following 146-residue polypeptide: Small ribosomal subunit protein uS9z (146 aa).

Belongs to the universal ribosomal protein uS9 family.

This chain is Small ribosomal subunit protein uS9z (RPS16A), found in Arabidopsis thaliana (Mouse-ear cress).